The following is a 144-amino-acid chain: Transcriptional regulator SlyA (144 aa).

The 134-residue stretch at 2–135 folds into the HTH marR-type domain; the sequence is ESPLGSDLAR…LSNMIAKLEK (134 aa). Residues 49 to 72 constitute a DNA-binding region (H-T-H motif); sequence QIQLAKAIGIEQPSLVRTLDQLEE.

The protein belongs to the SlyA family. As to quaternary structure, homodimer.

In terms of biological role, transcription regulator that can specifically activate or repress expression of target genes. This is Transcriptional regulator SlyA from Sodalis glossinidius (strain morsitans).